The primary structure comprises 402 residues: Cytochrome b561 and DOMON domain-containing protein At4g17280 (402 aa).

Residues 1–31 form the signal peptide; it reads MSNHMSIMKFLNQILCLSLILSISMTTLSFA. The 118-residue stretch at 54–171 folds into the DOMON domain; it reads LDSFLHYTYE…GTINTVWQDG (118 aa). The Cytochrome b561 domain maps to 183-379; that stretch reads TSGNNVRSVS…LEAFTWYVVI (197 aa). The next 2 helical transmembrane spans lie at 218-238 and 250-270; these read IHGI…AIIA and AWFY…VAGW. Heme b contacts are provided by H219, H255, and H288. The chain crosses the membrane as a helical span at residues 290-310; that stretch reads AIGIALFSLATVQVFAMFLRP. Residue H324 participates in heme b binding. Helical transmembrane passes span 326–346 and 359–379; these read TIGY…LGIL and IIVV…YVVI.

The cofactor is heme b.

The protein localises to the membrane. Its function is as follows. May act as a catecholamine-responsive trans-membrane electron transporter. The protein is Cytochrome b561 and DOMON domain-containing protein At4g17280 of Arabidopsis thaliana (Mouse-ear cress).